We begin with the raw amino-acid sequence, 141 residues long: Hemoglobin subunit beta-C(NA) (141 aa).

The 141-residue stretch at 1–141 folds into the Globin domain; sequence PBKALITGFW…VASALAHRYH (141 aa). Residues H58 and H87 each contribute to the heme b site.

The protein belongs to the globin family. Heterotetramer of two alpha chains and two beta chains. Red blood cells.

In terms of biological role, involved in oxygen transport from the lung to the various peripheral tissues. The chain is Hemoglobin subunit beta-C(NA) from Ammotragus lervia (Barbary sheep).